Consider the following 747-residue polypeptide: Asparagine synthetase [glutamine-hydrolyzing] 2 (747 aa).

The active-site For GATase activity is C2. Residues 2–218 (CGLAGIINLA…AGHYLEINLT (217 aa)) form the Glutamine amidotransferase type-2 domain. Residues 52-56 (RLSIL), 77-79 (NGE), and D100 contribute to the L-glutamine site. 395–396 (SP) provides a ligand contact to ATP.

The protein belongs to the asparagine synthetase family.

It carries out the reaction L-aspartate + L-glutamine + ATP + H2O = L-asparagine + L-glutamate + AMP + diphosphate + H(+). It functions in the pathway amino-acid biosynthesis; L-asparagine biosynthesis; L-asparagine from L-aspartate (L-Gln route): step 1/1. The protein is Asparagine synthetase [glutamine-hydrolyzing] 2 (asnH) of Bacillus subtilis (strain 168).